We begin with the raw amino-acid sequence, 484 residues long: Phospholipase A1-Ialpha2, chloroplastic (484 aa).

The N-terminal 63 residues, 1–63 (MALIQNPNMK…LAPVILNSPV (63 aa)), are a transit peptide targeting the chloroplast. The GXSXG signature appears at 295-299 (GHSMG). The active-site Acyl-ester intermediate is the serine 297. Catalysis depends on charge relay system residues aspartate 360 and histidine 411.

The protein belongs to the AB hydrolase superfamily. Lipase family. As to expression, ubiquitous. Highest expression in flowers and leaves.

It is found in the plastid. The protein localises to the chloroplast. Its subcellular location is the plastoglobule. The catalysed reaction is a 1,2-diacyl-3-O-[alpha-D-galactosyl-(1-&gt;6)-beta-D-galactosyl]-sn-glycerol + H2O = acyl-3-O-[alpha-D-galactosyl-(1-&gt;6)-beta-D-galactosyl]-sn-glycerol + a fatty acid + H(+). It carries out the reaction a 1,2-diacyl-3-O-(beta-D-galactosyl)-sn-glycerol + H2O = an acyl-3-O-(beta-D-galactosyl)-sn-glycerol + a fatty acid + H(+). Acylhydrolase that catalyzes the hydrolysis of phosphatidylcholine at the sn-1 position. Has a strong galactolipase activity toward monogalactosyldiacylglycerol (MGDG) and digalactosyldiacylglycerol (DGDG). Low triacylglycerol (TAG) lipase activity. Plays a role in plant growth and in leaf senescence. The chain is Phospholipase A1-Ialpha2, chloroplastic from Arabidopsis thaliana (Mouse-ear cress).